Here is a 156-residue protein sequence, read N- to C-terminus: Small ribosomal subunit protein uS7 (156 aa).

Belongs to the universal ribosomal protein uS7 family. As to quaternary structure, part of the 30S ribosomal subunit. Contacts proteins S9 and S11.

In terms of biological role, one of the primary rRNA binding proteins, it binds directly to 16S rRNA where it nucleates assembly of the head domain of the 30S subunit. Is located at the subunit interface close to the decoding center, probably blocks exit of the E-site tRNA. The chain is Small ribosomal subunit protein uS7 from Anoxybacillus flavithermus (strain DSM 21510 / WK1).